The chain runs to 110 residues: uncharacterized protein (110 aa).

Residues 16 to 46 (ELDKLRECEERLSVIEKQKQSSKQESEETYI) adopt a coiled-coil conformation. A compositionally biased stretch (basic and acidic residues) spans 85 to 96 (EEKDKKCQRKPE). The segment at 85-110 (EEKDKKCQRKPEAPSTPAVTIRSKRQ) is disordered.

This is an uncharacterized protein from Bacillus subtilis (strain 168).